A 346-amino-acid polypeptide reads, in one-letter code: Parapinopsin (346 aa).

Residues 1–29 are Extracellular-facing; that stretch reads MASIILINFSETDTLHLGSVNDHIMPRIG. N8 carries an N-linked (GlcNAc...) asparagine glycan. The helical transmembrane segment at 30–54 threads the bilayer; sequence YTILSIIMALSSTFGIILNMVVIIV. Topologically, residues 55-66 are cytoplasmic; it reads TVRYKQLRQPLN. Residues 67–91 form a helical membrane-spanning segment; sequence YALVNLAVADLGCPVFGGLLTAVTN. Topologically, residues 92 to 106 are extracellular; the sequence is AMGYFSLGRVGCVLE. Residues C103 and C180 are joined by a disulfide bond. A helical membrane pass occupies residues 107 to 126; sequence GFAVAFFGIAGLCSVAVIAV. Topologically, residues 127-145 are cytoplasmic; the sequence is DRYMVVCRPLGAVMFQTKH. The chain crosses the membrane as a helical span at residues 146–169; it reads ALAGVVFSWVWSFIWNTPPLFGWG. The Extracellular portion of the chain corresponds to 170-193; the sequence is SYQLEGVMTSCAPNWYRRDPVNVS. A glycan (N-linked (GlcNAc...) asparagine) is linked at N191. A helical membrane pass occupies residues 194–221; the sequence is YILCYFMLCFALPFATIIFSYMHLLHTL. Residues 222–244 are Cytoplasmic-facing; that stretch reads WQVAKLQVADSGSTAKVEVQVAR. A helical transmembrane segment spans residues 245–268; that stretch reads MVVIMVMAFLLTWLPYAAFALTVI. Topologically, residues 269–276 are extracellular; sequence IDSNIYIN. The helical transmembrane segment at 277–301 threads the bilayer; the sequence is PVIGTIPAYLAKSSTVFNPIIYIFM. At K288 the chain carries N6-(retinylidene)lysine. Over 302–346 the chain is Cytoplasmic; the sequence is NRQFRDYALPCLLCGKNPWAAKEGRDSDTNTLTTTVSKNTSVSPL. C315 carries S-palmitoyl cysteine lipidation. Residues 325–346 are disordered; that stretch reads GRDSDTNTLTTTVSKNTSVSPL. Over residues 330–346 the composition is skewed to low complexity; that stretch reads TNTLTTTVSKNTSVSPL.

It belongs to the G-protein coupled receptor 1 family. Opsin subfamily. In terms of processing, phosphorylated on some or all of the serine and threonine residues present in the C-terminal region. Parapineal organ.

The protein localises to the membrane. In Ictalurus punctatus (Channel catfish), this protein is Parapinopsin.